We begin with the raw amino-acid sequence, 105 residues long: Heat shock protein HspQ (105 aa).

The protein belongs to the HspQ family.

It localises to the cytoplasm. Its function is as follows. Involved in the degradation of certain denaturated proteins, including DnaA, during heat shock stress. This is Heat shock protein HspQ from Sodalis glossinidius (strain morsitans).